The sequence spans 180 residues: ATP-dependent protease subunit HslV (180 aa).

Residue Thr-8 is part of the active site. Na(+) contacts are provided by Gly-165, Asp-168, and Thr-171.

It belongs to the peptidase T1B family. HslV subfamily. In terms of assembly, a double ring-shaped homohexamer of HslV is capped on each side by a ring-shaped HslU homohexamer. The assembly of the HslU/HslV complex is dependent on binding of ATP.

The protein localises to the cytoplasm. It catalyses the reaction ATP-dependent cleavage of peptide bonds with broad specificity.. With respect to regulation, allosterically activated by HslU binding. Protease subunit of a proteasome-like degradation complex believed to be a general protein degrading machinery. This chain is ATP-dependent protease subunit HslV, found in Lactiplantibacillus plantarum (strain ATCC BAA-793 / NCIMB 8826 / WCFS1) (Lactobacillus plantarum).